The chain runs to 343 residues: 4-hydroxy-2-oxovalerate aldolase (343 aa).

The 251-residue stretch at 4 to 254 (PRLTDTTLRD…NPGLDVFSLM (251 aa)) folds into the Pyruvate carboxyltransferase domain. 12–13 (RD) is a binding site for substrate. Residue D13 participates in Mn(2+) binding. The Proton acceptor role is filled by H16. Substrate contacts are provided by S166 and H193. 2 residues coordinate Mn(2+): H193 and H195. Substrate is bound at residue Y284.

Belongs to the 4-hydroxy-2-oxovalerate aldolase family.

It catalyses the reaction (S)-4-hydroxy-2-oxopentanoate = acetaldehyde + pyruvate. The protein is 4-hydroxy-2-oxovalerate aldolase of Chloroflexus aurantiacus (strain ATCC 29364 / DSM 637 / Y-400-fl).